The sequence spans 238 residues: 14-3-3 protein 2 (238 aa).

The protein belongs to the 14-3-3 family.

In terms of biological role, probable adapter protein. The polypeptide is 14-3-3 protein 2 (Entamoeba histolytica (strain ATCC 30459 / HM-1:IMSS / ABRM)).